A 1442-amino-acid chain; its full sequence is Trafficking protein particle complex subunit 10 (1442 aa).

Residues 1-23 (MSNVSPNSMNLNGSTSSTASVND) show a composition bias toward polar residues. Disordered regions lie at residues 1-86 (MSNV…SSSS), 251-277 (TSSG…TSTK), 535-564 (GSSS…NSGI), 1208-1238 (LSSS…NHSK), 1316-1335 (QQQQ…QKQQ), and 1422-1442 (LQDN…TNKT). The span at 39 to 86 (SSSSASSISNSNSSSSNNLKPSTQPLSSSSTLNTPTQFSLQHSSSSSS) shows a compositional bias: low complexity. A compositionally biased stretch (low complexity) spans 535–553 (GSSSSNTPSSTSATTAANG). The segment covering 554–564 (KNTPMPSNSGI) has biased composition (polar residues). The span at 1208–1236 (LSSSTSPSSATDSSNSNGNNNNNNNNNNH) shows a compositional bias: low complexity. The segment covering 1425–1442 (NNNNNNNSINSQTSTNKT) has biased composition (low complexity).

It belongs to the TMEM1 family. In terms of assembly, part of the multisubunit TRAPP (transport protein particle) complex.

It localises to the golgi apparatus. Its subcellular location is the cis-Golgi network. Functionally, may play a role in vesicular transport from endoplasmic reticulum to Golgi. This Dictyostelium discoideum (Social amoeba) protein is Trafficking protein particle complex subunit 10 (trapcc10-1).